Here is a 159-residue protein sequence, read N- to C-terminus: Ribosomal RNA large subunit methyltransferase H (159 aa).

S-adenosyl-L-methionine-binding positions include Leu-76, Gly-108, and 127–132; that span reads FGRLTL.

Belongs to the RNA methyltransferase RlmH family. In terms of assembly, homodimer.

It localises to the cytoplasm. It carries out the reaction pseudouridine(1915) in 23S rRNA + S-adenosyl-L-methionine = N(3)-methylpseudouridine(1915) in 23S rRNA + S-adenosyl-L-homocysteine + H(+). Functionally, specifically methylates the pseudouridine at position 1915 (m3Psi1915) in 23S rRNA. The protein is Ribosomal RNA large subunit methyltransferase H of Listeria monocytogenes serovar 1/2a (strain ATCC BAA-679 / EGD-e).